We begin with the raw amino-acid sequence, 248 residues long: 2,3-bisphosphoglycerate-dependent phosphoglycerate mutase (248 aa).

Residues 8–15 (RHGESVWN), 21–22 (TG), Arg60, 87–90 (ERHY), Lys98, and 114–115 (RR) contribute to the substrate site. His9 (tele-phosphohistidine intermediate) is an active-site residue. Glu87 functions as the Proton donor/acceptor in the catalytic mechanism. The tract at residues 116–135 (SYDTPPPPMEVSDPRHPSHD) is disordered. 183 to 184 (GN) contributes to the substrate binding site.

Belongs to the phosphoglycerate mutase family. BPG-dependent PGAM subfamily. As to quaternary structure, homodimer.

The catalysed reaction is (2R)-2-phosphoglycerate = (2R)-3-phosphoglycerate. It participates in carbohydrate degradation; glycolysis; pyruvate from D-glyceraldehyde 3-phosphate: step 3/5. Functionally, catalyzes the interconversion of 2-phosphoglycerate and 3-phosphoglycerate. The chain is 2,3-bisphosphoglycerate-dependent phosphoglycerate mutase from Bdellovibrio bacteriovorus (strain ATCC 15356 / DSM 50701 / NCIMB 9529 / HD100).